A 309-amino-acid chain; its full sequence is Olfactory receptor 1A1 (309 aa).

Over 1-25 (MRENNQSSTLEFILLGVTGQQEQED) the chain is Extracellular. The N-linked (GlcNAc...) asparagine glycan is linked to asparagine 5. Residues 26-49 (FFYILFLFIYPITLIGNLLIVLAI) form a helical membrane-spanning segment. Residues 50–57 (CSDVHLHN) are Cytoplasmic-facing. Residues 58–79 (PMYFLLANLSLVDIFFSSVTIP) form a helical membrane-spanning segment. Topologically, residues 80-100 (KMLANHLLGSKSISFGGCLTQ) are extracellular. Cysteine 97 and cysteine 189 are joined by a disulfide. The helical transmembrane segment at 101–120 (MYFMIALGNTDSYILAAMAY) threads the bilayer. At 121 to 139 (DRAVAISRPLHYTTIMSPR) the chain is on the cytoplasmic side. A helical transmembrane segment spans residues 140 to 158 (SCIWLIAGSWVIGNANALP). The Extracellular segment spans residues 159–195 (HTLLTASLSFCGNQEVANFYCDITPLLKLSCSDIHFH). Residues 196–218 (VKMMYLGVGIFSVPLLCIIVSYI) form a helical membrane-spanning segment. The Cytoplasmic portion of the chain corresponds to 219 to 235 (RVFSTVFQVPSTKGVLK). The helical transmembrane segment at 236-258 (AFSTCGSHLTVVSLYYGTVMGMY) threads the bilayer. Topologically, residues 259–270 (FRPLTNYSLKDA) are extracellular. Residue asparagine 264 is glycosylated (N-linked (GlcNAc...) asparagine). Residues 271–290 (VITVMYTAVTPMLNPFIYSL) traverse the membrane as a helical segment. Over 291 to 309 (RNRDVKAALRKLFNKRISS) the chain is Cytoplasmic.

It belongs to the G-protein coupled receptor 1 family.

It localises to the cell membrane. In terms of biological role, odorant receptor. The sequence is that of Olfactory receptor 1A1 (OR1A1) from Pan troglodytes (Chimpanzee).